A 301-amino-acid chain; its full sequence is MTLDRDAASHVAEVLSEALPYIRRFVGKTLVIKYGGNAMESEELKTGFARDIVLMKAVGINPVVVHGGGPQIGDLLKRLSIESHFIDGMRVTDSATMDVVEMVLGGQVNKDIVNLINRHGGSAIGLTGKDAELIRARKLTVSRQTPEMTTPEIIDIGHVGEVVSVNTDLLNMLVKGDFIPVIAPIGVGANGESYNINADLVAGKVAEALKAEKLMLLTNIAGLMDKQGQVLTGLTTEQVNELIADGTIYGGMLPKIKCALDAVQGGVNSSHIIDGRVPNAVLLEIFTDSGVGTLITNRKPR.

Substrate contacts are provided by residues 68-69 (GG), Arg-90, and Asn-195.

It belongs to the acetylglutamate kinase family. ArgB subfamily.

It is found in the cytoplasm. It carries out the reaction N-acetyl-L-glutamate + ATP = N-acetyl-L-glutamyl 5-phosphate + ADP. It participates in amino-acid biosynthesis; L-arginine biosynthesis; N(2)-acetyl-L-ornithine from L-glutamate: step 2/4. In terms of biological role, catalyzes the ATP-dependent phosphorylation of N-acetyl-L-glutamate. This Pseudomonas putida (strain ATCC 700007 / DSM 6899 / JCM 31910 / BCRC 17059 / LMG 24140 / F1) protein is Acetylglutamate kinase.